A 52-amino-acid polypeptide reads, in one-letter code: PGLSCRFYQHKFPEVEDVVMVNVRSIAEMGAYVSLLEYNNIEGRILLSELSR.

In terms of domain architecture, S1 motif spans 16–52; the sequence is EDVVMVNVRSIAEMGAYVSLLEYNNIEGRILLSELSR. The residue at position 48 (S48) is a Phosphoserine; by HRI. S51 is subject to Phosphoserine.

The protein belongs to the eIF-2-alpha family. As to quaternary structure, eukaryotic translation initiation factor 2 eIF2 is a heterotrimeric complex composed of an alpha (EIF2S1), a beta (EIF2S2) and a gamma (EIF2S3) chain. eIF2 is member of the 43S pre-initiation complex (43S PIC). eIF2 forms a complex with at least CELF1/CUGBP1, CALR, CALR3, EIF2S1, EIF2S2, HSP90B1 and HSPA5. Interaction with METAP2 protects EIF2S1 from inhibitory phosphorylation. Interacts with ABCF1. Associates with ribosomes. Interacts with DDX3X in an RNA-independent manner. Phosphorylation at Ser-48 and Ser-51 stabilizes the eIF-2/GDP/eIF2B complex and prevents GDP/GTP exchange reaction, thus impairing the recycling of eIF-2 between successive rounds of initiation and leading to global inhibition of translation, while concomitantly initiating the preferential translation of integrated stress response (ISR)-specific mRNAs. Substrate for at least 4 kinases: EIF2AK1/HRI, EIF2AK2/PKR, EIF2AK3/PERK and EIF2AK4/GCN2. Phosphorylation on Ser-51 by the EIF2AK4/GCN2 protein kinase occurs in response to amino acid starvation and UV irradiation. Phosphorylation at Ser-51 by the EIF2AK3/PERK protein kinase occurs in response to the unfolded protein response. Phosphorylation at Ser-51 by EIF2AK1/HRI in response to mitochondrial damage promotes relocalization to the mitochondrial surface.

It is found in the cytoplasm. The protein resides in the stress granule. It localises to the cytosol. Its subcellular location is the mitochondrion. Activity is regulated by phosphorylation at Ser-49 and Ser-52, which stabilizes the eIF2/GDP/eIF2B complex and prevents the eIF2B-mediated exchange of GDP for GTP, thereby preventing the formation of the 43S pre-initiation complex (43S PIC). This results in the global attenuation of 5' cap-dependent protein synthesis and concomitant translation of ISR-specific mRNAs that contain a short upstream open reading frame (uORF) in their 5' UTR, such as ATF4, ATF5, DDIT3/CHOP and PPP1R15A/GADD34. Functionally, member of the eIF2 complex that functions in the early steps of protein synthesis by forming a ternary complex with GTP and initiator tRNA. This complex binds to a 40S ribosomal subunit, followed by mRNA binding to form a 43S pre-initiation complex. Junction of the 60S ribosomal subunit to form the 80S initiation complex is preceded by hydrolysis of the GTP bound to eIF2 and release of an eIF2-GDP binary complex. In order for eIF2 to recycle and catalyze another round of initiation, the GDP bound to eIF2 must exchange with GTP by way of a reaction catalyzed by eIF2B. EIF2S1/eIF2-alpha is a key component of the integrated stress response (ISR), required for adaptation to various stress: phosphorylation by metabolic-stress sensing protein kinases (EIF2AK1/HRI, EIF2AK2/PKR, EIF2AK3/PERK and EIF2AK4/GCN2) in response to stress converts EIF2S1/eIF2-alpha in a global protein synthesis inhibitor, leading to a attenuation of cap-dependent translation, while concomitantly initiating the preferential translation of ISR-specific mRNAs, such as the transcriptional activators ATF4 and QRICH1, and hence allowing ATF4- and QRICH1-mediated reprogramming. EIF2S1/eIF2-alpha also acts as an activator of mitophagy in response to mitochondrial damage: phosphorylation by EIF2AK1/HRI promotes relocalization to the mitochondrial surface, thereby triggering PRKN-independent mitophagy. The chain is Eukaryotic translation initiation factor 2 subunit 1 (EIF2S1) from Oryctolagus cuniculus (Rabbit).